We begin with the raw amino-acid sequence, 61 residues long: UPF0434 protein PSPPH_1629 (61 aa).

The protein belongs to the UPF0434 family.

In Pseudomonas savastanoi pv. phaseolicola (strain 1448A / Race 6) (Pseudomonas syringae pv. phaseolicola (strain 1448A / Race 6)), this protein is UPF0434 protein PSPPH_1629.